The following is a 240-amino-acid chain: ATP-dependent dethiobiotin synthetase BioD (240 aa).

An ATP-binding site is contributed by 13–18 (EVGKTV). Residue T17 participates in Mg(2+) binding. K38 is an active-site residue. S42 contacts substrate. Residues D55, 116 to 119 (EGAG), 176 to 177 (ND), and 205 to 207 (PWL) contribute to the ATP site. Mg(2+)-binding residues include D55 and E116.

The protein belongs to the dethiobiotin synthetase family. In terms of assembly, homodimer. Mg(2+) is required as a cofactor.

Its subcellular location is the cytoplasm. It carries out the reaction (7R,8S)-7,8-diammoniononanoate + CO2 + ATP = (4R,5S)-dethiobiotin + ADP + phosphate + 3 H(+). It participates in cofactor biosynthesis; biotin biosynthesis; biotin from 7,8-diaminononanoate: step 1/2. Functionally, catalyzes a mechanistically unusual reaction, the ATP-dependent insertion of CO2 between the N7 and N8 nitrogen atoms of 7,8-diaminopelargonic acid (DAPA, also called 7,8-diammoniononanoate) to form a ureido ring. The protein is ATP-dependent dethiobiotin synthetase BioD of Pseudescherichia vulneris (Escherichia vulneris).